Consider the following 542-residue polypeptide: Protein XP55 (542 aa).

A signal peptide spans 1–33 (MTARRTRWTRRTDRSLPIRSAAAAVAFAAGATA). A lipid anchor (N-palmitoyl cysteine) is attached at Cys-34. Cys-34 carries S-diacylglycerol cysteine lipidation. The tract at residues 519–542 (LEGRTNTASPAGPGGTSRTGGRKK) is disordered.

Belongs to the bacterial solute-binding protein 5 family.

The protein localises to the cell membrane. Its function is as follows. Required for transport of an unidentified substrate. The chain is Protein XP55 (xp55) from Streptomyces lividans.